Consider the following 353-residue polypeptide: Protein RecA (353 aa).

67 to 74 is an ATP binding site; the sequence is GPESSGKT. Residues 330–353 form a disordered region; that stretch reads SNPNSTPDFSVDDSEGVAETNEDF. Residues 339–353 are compositionally biased toward acidic residues; that stretch reads SVDDSEGVAETNEDF.

This sequence belongs to the RecA family.

The protein localises to the cytoplasm. Its function is as follows. Can catalyze the hydrolysis of ATP in the presence of single-stranded DNA, the ATP-dependent uptake of single-stranded DNA by duplex DNA, and the ATP-dependent hybridization of homologous single-stranded DNAs. It interacts with LexA causing its activation and leading to its autocatalytic cleavage. The sequence is that of Protein RecA from Shigella sonnei.